The chain runs to 423 residues: Adenylosuccinate synthetase (423 aa).

GTP contacts are provided by residues 12–18 (GDEGKGK) and 40–42 (GHT). Asp-13 functions as the Proton acceptor in the catalytic mechanism. Residues Asp-13 and Gly-40 each coordinate Mg(2+). IMP-binding positions include 13–16 (DEGK), 38–41 (NAGH), Thr-129, Arg-143, Gln-224, Thr-239, and Arg-303. Residue His-41 is the Proton donor of the active site. A substrate-binding site is contributed by 299-305 (ATTGRKR). GTP contacts are provided by residues Arg-305, 331 to 333 (KGD), and 412 to 414 (SVG).

This sequence belongs to the adenylosuccinate synthetase family. Homodimer. Requires Mg(2+) as cofactor.

It localises to the cytoplasm. The enzyme catalyses IMP + L-aspartate + GTP = N(6)-(1,2-dicarboxyethyl)-AMP + GDP + phosphate + 2 H(+). Its pathway is purine metabolism; AMP biosynthesis via de novo pathway; AMP from IMP: step 1/2. Functionally, plays an important role in the de novo pathway of purine nucleotide biosynthesis. Catalyzes the first committed step in the biosynthesis of AMP from IMP. The protein is Adenylosuccinate synthetase of Christiangramia forsetii (strain DSM 17595 / CGMCC 1.15422 / KT0803) (Gramella forsetii).